Reading from the N-terminus, the 752-residue chain is Zinc finger BED domain-containing protein RICESLEEPER 3 (752 aa).

The BED-type zinc finger occupies Arg-106–Asp-166. Cys-129, Cys-132, His-153, and Cys-159 together coordinate Zn(2+). Residues Glu-647–Leu-733 form an HATC (Hobo-Ac-Tam3) domain region.

As to quaternary structure, homodimer.

It localises to the nucleus. In terms of biological role, transposase-like protein that is essential for plant growth and development. May regulate global gene expression by recruiting other cellular factors. This is Zinc finger BED domain-containing protein RICESLEEPER 3 from Oryza sativa subsp. japonica (Rice).